A 359-amino-acid polypeptide reads, in one-letter code: MEVRVAGVRKEFARFPALHNVSLTIQSGELIALLGPSGSGKTTLLRLIAGLETPTEGMIFFGDEDASQKSVQERNVGFVFQHYALFRHMTVADNIGFGLKVRPGGTRPSTAEIRRRALELLDLVQLSGLEKRYPAQLSGGQRQRVALARAMAIEPRVLLLDEPFGALDAQVRKELRRWLREIHDKTGHTTVFVTHDQDEALELADRVVVMSQGRIEQVGTPDEVYDKPNSPFVYGFIGESSTLPVRVENGEVWLADRNIGLGAENMPDGDAQLYFRPHDVELLDGCGGCIAGTVIASRRSGGKRRVELEVGGARERIEIEIPAEHPAAEKSRIAFRPRYWTLFRAGDSELPAPKAAATT.

The ABC transporter domain maps to 3–237; that stretch reads VRVAGVRKEF…PNSPFVYGFI (235 aa). Position 35-42 (35-42) interacts with ATP; sequence GPSGSGKT.

Belongs to the ABC transporter superfamily. Sulfate/tungstate importer (TC 3.A.1.6) family. The complex is composed of two ATP-binding proteins (CysA), two transmembrane proteins (CysT and CysW) and a solute-binding protein (CysP).

The protein localises to the cell inner membrane. It carries out the reaction sulfate(out) + ATP + H2O = sulfate(in) + ADP + phosphate + H(+). It catalyses the reaction thiosulfate(out) + ATP + H2O = thiosulfate(in) + ADP + phosphate + H(+). In terms of biological role, part of the ABC transporter complex CysAWTP involved in sulfate/thiosulfate import. Responsible for energy coupling to the transport system. The chain is Sulfate/thiosulfate import ATP-binding protein CysA from Brucella melitensis biotype 1 (strain ATCC 23456 / CCUG 17765 / NCTC 10094 / 16M).